The following is a 274-amino-acid chain: Diaminopimelate epimerase (274 aa).

Substrate is bound by residues N11, Q44, and N64. The active-site Proton donor is C73. Substrate is bound by residues G74–N75, N157, N190, and E208–R209. Residue C217 is the Proton acceptor of the active site. G218–S219 is a substrate binding site.

Belongs to the diaminopimelate epimerase family. As to quaternary structure, homodimer.

It is found in the cytoplasm. It carries out the reaction (2S,6S)-2,6-diaminopimelate = meso-2,6-diaminopimelate. The protein operates within amino-acid biosynthesis; L-lysine biosynthesis via DAP pathway; DL-2,6-diaminopimelate from LL-2,6-diaminopimelate: step 1/1. Functionally, catalyzes the stereoinversion of LL-2,6-diaminopimelate (L,L-DAP) to meso-diaminopimelate (meso-DAP), a precursor of L-lysine and an essential component of the bacterial peptidoglycan. The polypeptide is Diaminopimelate epimerase (Escherichia coli O127:H6 (strain E2348/69 / EPEC)).